The sequence spans 373 residues: tRNA-specific 2-thiouridylase MnmA (373 aa).

ATP is bound by residues 12-19 and Met-38; that span reads GMSGGVDS. Residues 98-100 are interaction with target base in tRNA; that stretch reads NPD. Cys-103 functions as the Nucleophile in the catalytic mechanism. Cys-103 and Cys-200 are oxidised to a cystine. Gly-127 is an ATP binding site. Positions 150 to 152 are interaction with tRNA; the sequence is KDQ. Residue Cys-200 is the Cysteine persulfide intermediate of the active site. Residues 312–313 are interaction with tRNA; it reads RY.

Belongs to the MnmA/TRMU family.

Its subcellular location is the cytoplasm. It catalyses the reaction S-sulfanyl-L-cysteinyl-[protein] + uridine(34) in tRNA + AH2 + ATP = 2-thiouridine(34) in tRNA + L-cysteinyl-[protein] + A + AMP + diphosphate + H(+). Functionally, catalyzes the 2-thiolation of uridine at the wobble position (U34) of tRNA, leading to the formation of s(2)U34. The sequence is that of tRNA-specific 2-thiouridylase MnmA from Streptococcus pyogenes serotype M3 (strain SSI-1).